Consider the following 276-residue polypeptide: MLSYVSCGLLLALVTFHGTARSEMVFRCPSCTAERQAACPMLTETCGEIVREPGCGCCPVCARQEGEQCGVYTPRCSSGLRCYPKPDSELPLELLVQGLGRCGRKVDTEPTGSAEPREVSGEVQDPLDIGLTEVPPIRKPTKDSPWKESAVLQHRQQLKSKMKYHKVEDPKAPHAKQSQCQQELDQVLERISKITFKDNRTPLEDLYSLHIPNCDKRGQYNLKQCKMSVNGYRGECWCVNPHTGRPMPTSPLIRGDPNCNQYLDGQEMDPSVDPPN.

A signal peptide spans 1–22; it reads MLSYVSCGLLLALVTFHGTARS. In terms of domain architecture, IGFBP N-terminal spans 24-105; it reads MVFRCPSCTA…VQGLGRCGRK (82 aa). Cystine bridges form between Cys28-Cys55, Cys31-Cys57, Cys39-Cys58, Cys46-Cys61, Cys69-Cys82, Cys76-Cys102, Cys180-Cys214, Cys225-Cys236, and Cys238-Cys259. In terms of domain architecture, Thyroglobulin type-1 spans 177-259; sequence QSQCQQELDQ…SPLIRGDPNC (83 aa). Positions 254–256 match the Cell attachment site motif; sequence RGD.

In terms of assembly, interacts equally well with igf1 and igf2. In embryos at 24 hpf, initially expressed in the lens and cranial region, and at 48 and 72 hpf in the brain boundary vasculature. Expression in these regions persists throughout the hatching period and by 96 hpf expression is most abundant in the liver. In both male and female adults, highest expression is in the liver with modest expression in the brain. In male but not females adults, expressed at a low level in muscle and gonad. Also expressed in the adult intestine.

The protein localises to the secreted. Its function is as follows. IGF-binding proteins prolong the half-life of the IGFs and have been shown to either inhibit or stimulate the growth promoting effects of the IGFs on cell culture. They alter the interaction of IGFs with their cell surface receptors. The chain is Insulin-like growth factor-binding protein 2-A (igfbp2a) from Danio rerio (Zebrafish).